Here is a 156-residue protein sequence, read N- to C-terminus: Envelope glycoprotein L (156 aa).

The N-terminal stretch at 1–16 (MSPLVAVLVFFSAALG) is a signal peptide. The region spanning 50-156 (ELEWDDEDHP…LRYNGGPPAE (107 aa)) is the gL alphaherpesvirus-type domain. Cys71 and Cys95 form a disulfide bridge.

The protein belongs to the herpesviridae glycoprotein L (gL) family. Alphaherpesvirinae gL subfamily. As to quaternary structure, interacts with glycoprotein H (gH); this interaction is necessary for the correct processing and cell surface expression of gH. The heterodimer gH/gL seems to interact with gB trimers during fusion. In terms of processing, O-glycosylated, and sialylated.

It is found in the virion membrane. Its subcellular location is the host cell membrane. The protein localises to the host Golgi apparatus. It localises to the host trans-Golgi network. In terms of biological role, the heterodimer glycoprotein H-glycoprotein L is required for the fusion of viral and plasma membranes leading to virus entry into the host cell. Acts as a functional inhibitor of gH and maintains gH in an inhibited form. Upon binding to host integrins, gL dissociates from gH leading to activation of the viral fusion glycoproteins gB and gH. The protein is Envelope glycoprotein L of Suid herpesvirus 1 (strain Indiana-Funkhauser / Becker) (SuHV-1).